The following is a 76-amino-acid chain: Kappa-actitoxin-Avd4m (76 aa).

A signal peptide spans 1-19; sequence MNKALFLCLVVLCAAVVFA. A propeptide spanning residues 20–31 is cleaved from the precursor; that stretch reads AEDLQKAKHAPF. Intrachain disulfides connect cysteine 37/cysteine 72, cysteine 39/cysteine 65, and cysteine 55/cysteine 73.

It belongs to the sea anemone type 3 (BDS) potassium channel toxin family. As to expression, weakly expressed in the ectodermal tissue from the distal and proximal tentacles, body wall, and oral disk.

The protein localises to the secreted. It localises to the nematocyst. Its function is as follows. Blocks Kv3 voltage-gated potassium channels. Reduces blood pressure. The protein is Kappa-actitoxin-Avd4m of Anemonia viridis (Snakelocks anemone).